A 249-amino-acid chain; its full sequence is 2,3-bisphosphoglycerate-dependent phosphoglycerate mutase (249 aa).

Substrate-binding positions include 9–16, 22–23, Arg61, 88–91, Lys99, 115–116, and 184–185; these read RHGESEWN, TG, ERHY, RR, and GN. Catalysis depends on His10, which acts as the Tele-phosphohistidine intermediate. Catalysis depends on Glu88, which acts as the Proton donor/acceptor.

It belongs to the phosphoglycerate mutase family. BPG-dependent PGAM subfamily.

It carries out the reaction (2R)-2-phosphoglycerate = (2R)-3-phosphoglycerate. It participates in carbohydrate degradation; glycolysis; pyruvate from D-glyceraldehyde 3-phosphate: step 3/5. Functionally, catalyzes the interconversion of 2-phosphoglycerate and 3-phosphoglycerate. The protein is 2,3-bisphosphoglycerate-dependent phosphoglycerate mutase of Cutibacterium acnes (strain DSM 16379 / KPA171202) (Propionibacterium acnes).